Consider the following 404-residue polypeptide: Probable protein phosphatase 2C 30 (404 aa).

The segment covering 42-52 has biased composition (basic and acidic residues); it reads AERGAEEETSG. The interval 42–72 is disordered; that stretch reads AERGAEEETSGKRRRLDGGGGEASTDEEDRE. A PPM-type phosphatase domain is found at 77–399; that stretch reads RYGFTSVCGR…DNVSVVVVNL (323 aa). The Mn(2+) site is built by Asp111, Gly112, and Asp298. The tract at residues 321-369 is disordered; that stretch reads GRRERNRSSPTSNLSPRQSSSSGDEAPNDGAPSAAAGSESDEESAAEED. Over residues 330–343 the composition is skewed to polar residues; sequence PTSNLSPRQSSSSG. Asp390 serves as a coordination point for Mn(2+).

It belongs to the PP2C family. Interacts with PYL5 and SAPK2. Binding to PYL5 is dependent on the presence of abscisic acid (ABA). Interacts with PYL3, PYL5 and PYL9. Binding to PYL5 and PYL9 is dependent on the presence of ABA. The cofactor is Mg(2+). Requires Mn(2+) as cofactor.

Its subcellular location is the nucleus. The enzyme catalyses O-phospho-L-seryl-[protein] + H2O = L-seryl-[protein] + phosphate. The catalysed reaction is O-phospho-L-threonyl-[protein] + H2O = L-threonyl-[protein] + phosphate. Functionally, together with ABI5, PYL5 and SAPK2, is part of an abscisic acid (ABA) signaling unit that modulates seed germination and early seedling growth. This is Probable protein phosphatase 2C 30 from Oryza sativa subsp. japonica (Rice).